The sequence spans 209 residues: MLVLIKHPLIEIKLTEMRAAETSHKVFRSNLDEIASLMVYEVMRNYQTKPKKVITPIGVETIGKSFDREVVIIPILRAGLGMMQGILAMVPEARVGHIGIYRDEKTFQPIDYFFKIPDVPKDSYIMVVDPMLATGVSANDAINKLVNLGFSNIKLICLVGVQKGIDLIQKNHPNVDIYLASQDEKLNENNYIIPGLGDAGDRIFGTKAK.

5-phospho-alpha-D-ribose 1-diphosphate contacts are provided by residues Arg-77, Arg-102, and 129 to 137 (DPMLATGVS). Residues Ile-192 and 197 to 199 (GDA) each bind uracil. 5-phospho-alpha-D-ribose 1-diphosphate is bound at residue Asp-198.

It belongs to the UPRTase family. It depends on Mg(2+) as a cofactor.

It catalyses the reaction UMP + diphosphate = 5-phospho-alpha-D-ribose 1-diphosphate + uracil. The protein operates within pyrimidine metabolism; UMP biosynthesis via salvage pathway; UMP from uracil: step 1/1. Allosterically activated by GTP. Catalyzes the conversion of uracil and 5-phospho-alpha-D-ribose 1-diphosphate (PRPP) to UMP and diphosphate. This chain is Uracil phosphoribosyltransferase, found in Metamycoplasma arthritidis (strain 158L3-1) (Mycoplasma arthritidis).